The following is a 214-amino-acid chain: Ribonuclease HII (214 aa).

An RNase H type-2 domain is found at 26–214 (EIVCGVDEAG…PVRAALDLIR (189 aa)). Residues Asp-32, Glu-33, and Asp-124 each coordinate a divalent metal cation.

The protein belongs to the RNase HII family. The cofactor is Mn(2+). Mg(2+) serves as cofactor.

It is found in the cytoplasm. The catalysed reaction is Endonucleolytic cleavage to 5'-phosphomonoester.. Functionally, endonuclease that specifically degrades the RNA of RNA-DNA hybrids. This Burkholderia orbicola (strain MC0-3) protein is Ribonuclease HII.